We begin with the raw amino-acid sequence, 685 residues long: Galactocerebrosidase (685 aa).

Positions 1–42 (MAEWLLSASRQRRVKAMTAAAGSAGRAAVPFLLCALLAPGGA) are cleaved as a signal peptide. Threonine 109 lines the substrate pocket. Asparagine 143 is a glycosylation site (N-linked (GlcNAc...) asparagine). Substrate is bound by residues tryptophan 151 and asparagine 197. The Proton donor/acceptor role is filled by glutamate 198. The active-site Nucleophile is the glutamate 274. Cysteine 287 and cysteine 394 are oxidised to a cystine. Asparagine 379 is a glycosylation site (N-linked (GlcNAc...) asparagine). Arginine 396 contacts substrate. N-linked (GlcNAc...) asparagine glycosylation is found at asparagine 403, asparagine 451, asparagine 556, asparagine 559, and asparagine 602.

It belongs to the glycosyl hydrolase 59 family.

It is found in the lysosome. The enzyme catalyses a beta-D-galactosyl-(1&lt;-&gt;1')-N-acylsphing-4-enine + H2O = an N-acylsphing-4-enine + D-galactose. It catalyses the reaction beta-D-galactosyl-(1&lt;-&gt;1)-sphing-4-enine + H2O = sphing-4-enine + D-galactose. It carries out the reaction a D-galactosylceramide + H2O = an N-acyl-sphingoid base + D-galactose. In terms of biological role, hydrolyzes the galactose ester bonds of glycolipids such as galactosylceramide and galactosylsphingosine. Enzyme with very low activity responsible for the lysosomal catabolism of galactosylceramide, a major lipid in myelin, kidney and epithelial cells of small intestine and colon. This is Galactocerebrosidase from Macaca mulatta (Rhesus macaque).